Consider the following 227-residue polypeptide: A-type potassium channel modulatory protein KCNIP1 (227 aa).

Residues 38–94 (LEMTMVCHRPEGLEQLEAQTNFTKRELQVLYRGFKNECPSGVVNEETFKQIYAQFFP) enclose the EF-hand 1; degenerate domain. EF-hand domains lie at 97–132 (DASTYAHYLFNAFDTTQTGSVKFEDFVTALSILLRG), 133–168 (TVHEKLRWTFNLYDINKDGYINKEEMMDIVKAIYDM), and 181–216 (TPRQHVDVFFQKMDKNKDGIVTLDEFLESCQEDDNI). Ca(2+) contacts are provided by Asp-146, Asn-148, Asp-150, Tyr-152, Glu-157, Asp-194, Asn-196, Asp-198, and Glu-205. The interval 214–227 (DNIMRSLQLFQNVM) is interaction with KCND2.

It belongs to the recoverin family. Component of heteromultimeric potassium channels. Identified in potassium channel complexes containing KCND1, KCND2, KCND3, KCNIP1, KCNIP2, KCNIP3, KCNIP4, DPP6 and DPP10. Part of a heterooctamer composed of the tetrameric channel and four KCNIP1 chains. Probably part of a complex consisting of KCNIP1, KCNIP2 isoform 3 and KCND2. Self-associates to form homodimers and homotetramers. Interacts with KCNIP2 isoform 3 in a calcium-dependent manner. Interacts with KCND2; this interaction mediates the capture of both the N- and C-terminus of KCND2, thus preventing KCND2 N-type inactivation and modulates the channel gating kinetics. Interacts with KCND3; each KCNIP1 monomer interacts with two adjacent KCND3 subunits, through both the N-terminal inactivation ball of a KCND3 subunit and a C-terminal helix from the adjacent KCND3 subunit, clamping them together; this interaction stabilizes the tetrameric form and modulates the channel gating kinetics namely channel activation and inactivation kinetics and rate of recovery from inactivation. As to expression, expressed in brain. Found in a subpopulation of neurons widely distributed and enriched in Purkinje cells of the cerebellum and in the reticular thalamic and medial habenular nuclei.

It is found in the cell membrane. The protein localises to the cytoplasm. The protein resides in the cell projection. It localises to the dendrite. Its function is as follows. Regulatory subunit of Kv4/D (Shal)-type voltage-gated rapidly inactivating A-type potassium channels. Regulates channel density, inactivation kinetics and rate of recovery from inactivation in a calcium-dependent and isoform-specific manner. Modulates KCND2/Kv4.2 currents. In vitro, modulates KCND1/Kv4.1 currents. Increases the presence of KCND2 at the cell surface. The sequence is that of A-type potassium channel modulatory protein KCNIP1 from Mus musculus (Mouse).